The following is a 149-amino-acid chain: UPF0310 protein SSO2595 (149 aa).

It belongs to the UPF0310 family.

The chain is UPF0310 protein SSO2595 from Saccharolobus solfataricus (strain ATCC 35092 / DSM 1617 / JCM 11322 / P2) (Sulfolobus solfataricus).